The following is a 146-amino-acid chain: Hemoglobin cathodic subunit beta (146 aa).

In terms of domain architecture, Globin spans 2-146 (QWSSSERSVI…VVSGLSKQYF (145 aa)). Histidine 63 is a heme b binding site.

In terms of assembly, heterotetramer of two alpha and two beta chains. Red blood cells.

In terms of biological role, involved in oxygen transport from the gills to various peripheral tissues. This Ophisurus serpens (Serpent eel) protein is Hemoglobin cathodic subunit beta.